Consider the following 352-residue polypeptide: MKNKNLSMPSLKEKLLQETVEHIDITRFDARPIIDAMDHMSFTSRDLARATQIFNRMLQDEQCSIILSLAGSTSAGGCMKLYADLVKYNMVDAIVATGASIVDMDFFEALGFRHYQGSPAVEDRQLRDLYIDRIYDTYIDEEDLQRCDHTIYEIANSLEPRPYSSREFIHHMGAYLAQGKAKKEESLVQLAYEHDVPIFCPAFTDSSAGFGLVLHQVKNPDRHLTIDSIRDFRELTDIKIKAGTTGLLMIGGGVPKNFVQDTVVCAEVIGKTVDMHKYAIQITVADVRDGACSSSTLKEACSWGKVDTAYEQMVYAEATSGLPLLASDAYHRGYWKDRSPRQYANLFKSESK.

Belongs to the deoxyhypusine synthase family.

The protein is Deoxyhypusine synthase-like protein of Coxiella burnetii (strain Dugway 5J108-111).